The sequence spans 475 residues: tRNA (guanine(37)-N(1))-methyltransferase (475 aa).

S-adenosyl-L-methionine is bound by residues histidine 219, 258–259, and 286–287; these read DL and DG. Residues 306–328 are disordered; the sequence is KITKQKPTSNDKKRNRKVESPTV. Position 349 (asparagine 349) interacts with S-adenosyl-L-methionine. Polar residues predominate over residues 456–469; that stretch reads NLVSQSDVSKSSDN. The interval 456 to 475 is disordered; that stretch reads NLVSQSDVSKSSDNILEKDT.

It belongs to the class I-like SAM-binding methyltransferase superfamily. TRM5/TYW2 family. In terms of assembly, monomer.

Its subcellular location is the mitochondrion matrix. It localises to the nucleus. It is found in the cytoplasm. The enzyme catalyses guanosine(37) in tRNA + S-adenosyl-L-methionine = N(1)-methylguanosine(37) in tRNA + S-adenosyl-L-homocysteine + H(+). Specifically methylates the N1 position of guanosine-37 in various cytoplasmic and mitochondrial tRNAs. Methylation is not dependent on the nature of the nucleoside 5' of the target nucleoside. This is the first step in the biosynthesis of wybutosine (yW), a modified base adjacent to the anticodon of tRNAs and required for accurate decoding. The polypeptide is tRNA (guanine(37)-N(1))-methyltransferase (Batrachochytrium dendrobatidis (strain JAM81 / FGSC 10211) (Frog chytrid fungus)).